Here is a 77-residue protein sequence, read N- to C-terminus: Translation initiation factor IF-1, chloroplastic (77 aa).

The region spanning 1–71 (MKEQKLIHEG…TKGRIIYRLR (71 aa)) is the S1-like domain.

It belongs to the IF-1 family. As to quaternary structure, component of the 30S ribosomal translation pre-initiation complex which assembles on the 30S ribosome in the order IF-2 and IF-3, IF-1 and N-formylmethionyl-tRNA(fMet); mRNA recruitment can occur at any time during PIC assembly.

Its subcellular location is the plastid. It localises to the chloroplast. Functionally, one of the essential components for the initiation of protein synthesis. Stabilizes the binding of IF-2 and IF-3 on the 30S subunit to which N-formylmethionyl-tRNA(fMet) subsequently binds. Helps modulate mRNA selection, yielding the 30S pre-initiation complex (PIC). Upon addition of the 50S ribosomal subunit IF-1, IF-2 and IF-3 are released leaving the mature 70S translation initiation complex. The polypeptide is Translation initiation factor IF-1, chloroplastic (Drimys granadensis).